Reading from the N-terminus, the 1673-residue chain is Leucine-rich repeat- and IQ domain-containing protein 1 (1673 aa).

Disordered regions lie at residues 22 to 48 (ISIS…SDTD) and 189 to 208 (LEEK…KRTF). The LRR 1 repeat unit spans residues 34 to 59 (NDSVSDTQSDSSDTDLLELPESVLHY). The LRR 2 repeat unit spans residues 216 to 239 (QCWMRQFEVEKKHLEDLQKQDQDK). An IQ 1 domain is found at 291–320 (RYDAAVKIQATYRASVTYRKYSPIIKEQME). The tract at residues 324-374 (RRAQELKEKEAKIRQKEEEKRRRLEEEQRVEEEKKKKMLEERRRREREYEE) is disordered. A compositionally biased stretch (basic and acidic residues) spans 326-374 (AQELKEKEAKIRQKEEEKRRRLEEEQRVEEEKKKKMLEERRRREREYEE). The LRR 3 repeat unit spans residues 491-516 (LPKLKINENLSKNQCSEQPSDQEFNA). Disordered regions lie at residues 544–658 (ESDT…EEIP) and 679–702 (EGEA…GSHS). Basic and acidic residues-rich tracts occupy residues 549-567 (TEEH…ETEK) and 588-602 (EETR…EIKE). Residues 603–629 (MTQQGGPSDENNSSPISMQKSLPSLTP) show a composition bias toward polar residues. One copy of the LRR 4 repeat lies at 641-665 (LEEDQETDLKSERIEEIPEEGVLSC). Residues 647 to 656 (TDLKSERIEE) are compositionally biased toward basic and acidic residues. LRR repeat units lie at residues 830 to 852 (CSNL…LSHC), 853 to 873 (TRLK…CENL), 874 to 894 (ENLS…GFDG), 895 to 919 (CTNL…SLKY), 921 to 939 (QELT…LCEA), 940 to 961 (PTIV…IGNC), 962 to 983 (GLLQ…LRNH), 984 to 1005 (VLLR…LSSC), 1007 to 1029 (LPLL…LFHL), 1030 to 1054 (VSLE…WFNA), and 1067 to 1090 (PVLQ…VLNG). Disordered regions lie at residues 1163 to 1230 (AHEQ…HCEE) and 1308 to 1330 (PTTT…EERR). Composition is skewed to polar residues over residues 1168-1226 (DVNT…PSTS) and 1308-1325 (PTTT…QTTS). 2 consecutive IQ domains span residues 1280–1309 (PTKA…MHPT) and 1340–1369 (REKA…AIKD). The LRR 16 repeat unit spans residues 1378–1405 (EIDLEDFEFDEDALEKDWPALDSTGFPS).

The protein is Leucine-rich repeat- and IQ domain-containing protein 1 (Lrriq1) of Mus musculus (Mouse).